The primary structure comprises 249 residues: Triosephosphate isomerase (249 aa).

Substrate is bound at residue 8–10 (NWK). His95 acts as the Electrophile in catalysis. Residue Glu163 is the Proton acceptor of the active site. The substrate site is built by Gly169 and Ser209.

It belongs to the triosephosphate isomerase family. In terms of assembly, homodimer.

The protein resides in the cytoplasm. It carries out the reaction D-glyceraldehyde 3-phosphate = dihydroxyacetone phosphate. Its pathway is carbohydrate biosynthesis; gluconeogenesis. It functions in the pathway carbohydrate degradation; glycolysis; D-glyceraldehyde 3-phosphate from glycerone phosphate: step 1/1. In terms of biological role, involved in the gluconeogenesis. Catalyzes stereospecifically the conversion of dihydroxyacetone phosphate (DHAP) to D-glyceraldehyde-3-phosphate (G3P). The polypeptide is Triosephosphate isomerase (Orientia tsutsugamushi (strain Ikeda) (Rickettsia tsutsugamushi)).